A 625-amino-acid polypeptide reads, in one-letter code: Arginine--tRNA ligase (625 aa).

The 'HIGH' region signature appears at 128–138 (VNPTKPLHMGH).

The protein belongs to the class-I aminoacyl-tRNA synthetase family.

It localises to the cytoplasm. The enzyme catalyses tRNA(Arg) + L-arginine + ATP = L-arginyl-tRNA(Arg) + AMP + diphosphate. This chain is Arginine--tRNA ligase (argS), found in Pyrococcus abyssi (strain GE5 / Orsay).